The following is a 317-amino-acid chain: ADP-L-glycero-D-manno-heptose-6-epimerase (317 aa).

NADP(+)-binding positions include Phe-10 to Ile-11, Asp-31 to Asp-32, Gln-38, Lys-53, Gln-75 to Ser-79, and Asn-92. Tyr-139 functions as the Proton acceptor in the catalytic mechanism. Lys-143 contacts NADP(+). Asn-166 lines the substrate pocket. The NADP(+) site is built by Val-167 and Lys-175. The active-site Proton acceptor is Lys-175. Substrate is bound by residues Gly-177, His-184, Phe-198–Val-201, Arg-211, and Tyr-275.

It belongs to the NAD(P)-dependent epimerase/dehydratase family. HldD subfamily. In terms of assembly, homopentamer. It depends on NADP(+) as a cofactor.

It carries out the reaction ADP-D-glycero-beta-D-manno-heptose = ADP-L-glycero-beta-D-manno-heptose. Its pathway is nucleotide-sugar biosynthesis; ADP-L-glycero-beta-D-manno-heptose biosynthesis; ADP-L-glycero-beta-D-manno-heptose from D-glycero-beta-D-manno-heptose 7-phosphate: step 4/4. Its function is as follows. Catalyzes the interconversion between ADP-D-glycero-beta-D-manno-heptose and ADP-L-glycero-beta-D-manno-heptose via an epimerization at carbon 6 of the heptose. This is ADP-L-glycero-D-manno-heptose-6-epimerase from Shewanella frigidimarina (strain NCIMB 400).